Consider the following 164-residue polypeptide: Diphosphoinositol polyphosphate phosphohydrolase 3-beta (164 aa).

Residues Arg-9, 17–19 (KKR), and 38–40 (SSR) contribute to the substrate site. Residues 17-144 (KKRAACLCFR…VHAEYLEKLK (128 aa)) form the Nudix hydrolase domain. Residues Gly-49 and Glu-65 each contribute to the Mg(2+) site. Residues 50–71 (GGMEPEEEPGGAAVREVYEEAG) carry the Nudix box motif. The active-site Proton acceptor is the Glu-68. Glu-69 is a Mg(2+) binding site. Substrate-binding positions include 89-91 (RKH), Arg-115, and Lys-133. The tract at residues 144–164 (KLGGSPTNGNSMAPSSPDSDP) is disordered. Residues 148-164 (SPTNGNSMAPSSPDSDP) are compositionally biased toward polar residues.

Belongs to the Nudix hydrolase family. DIPP subfamily. Mg(2+) is required as a cofactor. The cofactor is Mn(2+). In terms of tissue distribution, mainly expressed in testis and, at lower level in brain. According to PubMed:12121577, it is also expressed in pancreas and weakly expressed in thymus, prostate, ovary, lung, small intestine and heart.

It localises to the cytoplasm. The catalysed reaction is diphospho-myo-inositol polyphosphate + H2O = myo-inositol polyphosphate + phosphate.. It carries out the reaction P(1),P(6)-bis(5'-adenosyl) hexaphosphate + H2O = adenosine 5'-pentaphosphate + AMP + 2 H(+). It catalyses the reaction P(1),P(5)-bis(5'-adenosyl) pentaphosphate + H2O = adenosine 5'-tetraphosphate + AMP + 2 H(+). In terms of biological role, cleaves a beta-phosphate from the diphosphate groups in PP-InsP5 (diphosphoinositol pentakisphosphate), suggesting that it may play a role in signal transduction. Also able to catalyze the hydrolysis of dinucleoside oligophosphates, with Ap6A and Ap5A being the preferred substrates. The major reaction products are ADP and p4a from Ap6A and ADP and ATP from Ap5A. Also able to hydrolyze 5-phosphoribose 1-diphosphate. The sequence is that of Diphosphoinositol polyphosphate phosphohydrolase 3-beta from Homo sapiens (Human).